A 255-amino-acid chain; its full sequence is Thiazole synthase (255 aa).

Lys-97 acts as the Schiff-base intermediate with DXP in catalysis. Residues Gly-158, 184–185 (AG), and 206–207 (NT) each bind 1-deoxy-D-xylulose 5-phosphate.

This sequence belongs to the ThiG family. In terms of assembly, homotetramer. Forms heterodimers with either ThiH or ThiS.

It localises to the cytoplasm. The enzyme catalyses [ThiS sulfur-carrier protein]-C-terminal-Gly-aminoethanethioate + 2-iminoacetate + 1-deoxy-D-xylulose 5-phosphate = [ThiS sulfur-carrier protein]-C-terminal Gly-Gly + 2-[(2R,5Z)-2-carboxy-4-methylthiazol-5(2H)-ylidene]ethyl phosphate + 2 H2O + H(+). Its pathway is cofactor biosynthesis; thiamine diphosphate biosynthesis. Functionally, catalyzes the rearrangement of 1-deoxy-D-xylulose 5-phosphate (DXP) to produce the thiazole phosphate moiety of thiamine. Sulfur is provided by the thiocarboxylate moiety of the carrier protein ThiS. In vitro, sulfur can be provided by H(2)S. The chain is Thiazole synthase from Moorella thermoacetica (strain ATCC 39073 / JCM 9320).